A 351-amino-acid chain; its full sequence is Photosystem II D2 protein (351 aa).

A helical transmembrane segment spans residues 39 to 59; that stretch reads TAYLAAGGWFTGTTFVTSWYT. Position 116 (His116) interacts with chlorophyll a. A helical membrane pass occupies residues 123-139; that stretch reads GFCLRQFEIARLVGIRP. Gln128 and Asn141 together coordinate pheophytin a. The chain crosses the membrane as a helical span at residues 151–164; it reads VFVSVFLLYPLGQA. Position 196 (His196) interacts with chlorophyll a. A helical membrane pass occupies residues 206–226; it reads GALLCAIHGATVENTLFEDGD. Positions 213 and 260 each coordinate a plastoquinone. His213 is a binding site for Fe cation. Residue His267 coordinates Fe cation. Residues 277–293 form a helical membrane-spanning segment; that stretch reads GLWTSSIGIVGLALNLR.

This sequence belongs to the reaction center PufL/M/PsbA/D family. PSII is composed of 1 copy each of membrane proteins PsbA, PsbB, PsbC, PsbD, PsbE, PsbF, PsbH, PsbI, PsbJ, PsbK, PsbL, PsbM, PsbT, PsbX, PsbY, PsbZ, Psb30/Ycf12, at least 3 peripheral proteins of the oxygen-evolving complex and a large number of cofactors. It forms dimeric complexes. The D1/D2 heterodimer binds P680, chlorophylls that are the primary electron donor of PSII, and subsequent electron acceptors. It shares a non-heme iron and each subunit binds pheophytin, quinone, additional chlorophylls, carotenoids and lipids. There is also a Cl(-1) ion associated with D1 and D2, which is required for oxygen evolution. The PSII complex binds additional chlorophylls, carotenoids and specific lipids. is required as a cofactor.

It is found in the plastid. The protein localises to the chloroplast thylakoid membrane. The enzyme catalyses 2 a plastoquinone + 4 hnu + 2 H2O = 2 a plastoquinol + O2. Functionally, photosystem II (PSII) is a light-driven water:plastoquinone oxidoreductase that uses light energy to abstract electrons from H(2)O, generating O(2) and a proton gradient subsequently used for ATP formation. It consists of a core antenna complex that captures photons, and an electron transfer chain that converts photonic excitation into a charge separation. The D1/D2 (PsbA/PsbD) reaction center heterodimer binds P680, the primary electron donor of PSII as well as several subsequent electron acceptors. D2 is needed for assembly of a stable PSII complex. This is Photosystem II D2 protein from Thalassiosira pseudonana (Marine diatom).